The sequence spans 720 residues: MTATQGKCPVMHGGATTVNISTAEWWPKALNLDILSQHDRKTNPMGPDFNYQEEVKKLDVAALKQDLQALMTDSQDWWPADWGHYGGLMIRLTWHAAGTYRIADGRGGAGTGNQRFAPLNSWPDNTNLDKARRLLWPIKQKYGNKLSWADLIAYAGTIAYESMGLKTFGFAFGREDIWHPEKDIYWGPEKEWVPPSTNPNSRYTGDRELENPLAAVTMGLIYVNPEGVDGNPDPLKTAHDVRVTFARMAMNDEETVALTAGGHTVGKCHGNGNAALLGPEPEGADVEDQGLGWINKTQSGIGRNAVTSGLEGAWTPHPTQWDNGYFRMLLNYDWELKKSPAGAWQWEPINPREEDLPVDVEDPSIRRNLVMTDADMAMKMDPEYRKISERFYQDPAYFADVFARAWFKLTHRDMGPKARYIGPDVPQEDLIWQDPIPAGNRNYDVQAVKDRIAASGLSISELVSTAWDSARTYRNSDKRGGANGARIRLAPQKDWEGNEPDRLAKVLAVLEGIAAATGASVADVIVLAGNVGVEQAARAAGVEIVLPFAPGRGDATAEQTDTESFAVLEPIHDGYRNWLKQDYAATPEELLLDRTQLLGLTAPEMTVLIGGLRVLGTNHGGTKHGVFTDREGVLTNDFFVNLTDMNYLWKPAGKNLYEICDRKTNQVKWTATRVDLVFGSNSILRAYSELYAQDDNKEKFVRDFVAAWTKVMNADRFDLD.

Residues 94–222 (WHAAGTYRIA…LAAVTMGLIY (129 aa)) constitute a cross-link (tryptophyl-tyrosyl-methioninium (Trp-Tyr) (with M-248)). Catalysis depends on His-95, which acts as the Proton acceptor. The tryptophyl-tyrosyl-methioninium (Tyr-Met) (with W-94) cross-link spans 222 to 248 (YVNPEGVDGNPDPLKTAHDVRVTFARM). His-263 provides a ligand contact to heme b.

The protein belongs to the peroxidase family. Peroxidase/catalase subfamily. As to quaternary structure, homodimer. The cofactor is heme b. In terms of processing, formation of the three residue Trp-Tyr-Met cross-link is important for the catalase, but not the peroxidase activity of the enzyme.

It carries out the reaction H2O2 + AH2 = A + 2 H2O. The enzyme catalyses 2 H2O2 = O2 + 2 H2O. Bifunctional enzyme with both catalase and broad-spectrum peroxidase activity. The polypeptide is Catalase-peroxidase (Synechococcus elongatus (strain ATCC 33912 / PCC 7942 / FACHB-805) (Anacystis nidulans R2)).